Reading from the N-terminus, the 475-residue chain is Ankyrin repeat, SAM and basic leucine zipper domain-containing protein 1 (475 aa).

The segment at 1–25 is disordered; the sequence is MAAGALRGLPVAGGGESSESEDDGW. A phosphoserine mark is found at Ser-17, Ser-18, and Ser-20. ANK repeat units lie at residues 45–74, 78–107, 110–144, 148–177, 181–210, and 214–243; these read EKKE…SVDS, YGWT…NASF, DKQS…DPNV, RLMT…EVNT, NGYT…NKML, and DGKM…PLEG. The 63-residue stretch at 272–334 folds into the SAM domain; that stretch reads SYTAFGDLEV…KILAALKELQ (63 aa).

In terms of assembly, interacts with DDX4, PIWIL1, RANBP9 and TDRD1.

It is found in the cytoplasm. Plays a central role during spermatogenesis by repressing transposable elements and preventing their mobilization, which is essential for the germline integrity. Acts via the piRNA metabolic process, which mediates the repression of transposable elements during meiosis by forming complexes composed of piRNAs and Piwi proteins and governs the methylation and subsequent repression of transposons. Its association with pi-bodies suggests a participation in the primary piRNAs metabolic process. Required prior to the pachytene stage to facilitate the production of multiple types of piRNAs, including those associated with repeats involved in the regulation of retrotransposons. May act by mediating protein-protein interactions during germ cell maturation. This is Ankyrin repeat, SAM and basic leucine zipper domain-containing protein 1 (ASZ1) from Nomascus leucogenys (Northern white-cheeked gibbon).